A 289-amino-acid chain; its full sequence is Cyclo(L-tyrosyl-L-tyrosyl) synthase (289 aa).

The segment at Met-1–Arg-48 is disordered. The active-site Nucleophile is the Ser-88. Substrate-binding positions include Asn-91, Tyr-229–Glu-233, and Tyr-253.

Belongs to the CDPS family. In terms of assembly, homodimer.

It carries out the reaction 2 L-tyrosyl-tRNA(Tyr) = cyclo(L-tyrosyl-L-tyrosyl) + 2 tRNA(Tyr). Its function is as follows. Involved in the biosynthesis of mycocyclosin. It uses activated amino acids in the form of aminoacyl-tRNAs (aa-tRNAs) as substrates to catalyze the ATP-independent formation of cyclodipeptides which are intermediates in diketopiperazine (DKP) biosynthetic pathways. Catalyzes the formation of cyclo(L-Tyr-L-Tyr) (cYY) from L-tyrosyl-tRNA(Tyr). The sequence is that of Cyclo(L-tyrosyl-L-tyrosyl) synthase from Mycobacterium tuberculosis (strain CDC 1551 / Oshkosh).